The following is a 107-amino-acid chain: Sperm-specific class P protein 31 (107 aa).

Positions Met-1 to Ser-107 constitute an MSP domain.

As to expression, expressed at higher level in testis.

The chain is Sperm-specific class P protein 31 (ssp-31) from Caenorhabditis elegans.